A 434-amino-acid polypeptide reads, in one-letter code: Ataxin-10 homolog (434 aa).

This sequence belongs to the ataxin-10 family.

It is found in the cytoplasm. The protein localises to the nucleus. Functionally, may play a role in the regulation of cytokinesis. The protein is Ataxin-10 homolog (mug160) of Schizosaccharomyces pombe (strain 972 / ATCC 24843) (Fission yeast).